The primary structure comprises 1696 residues: Proprotein convertase subtilisin/kexin type 5 (1696 aa).

A signal peptide spans 1 to 25 (MPPAIVILALFTAALCAVNLRTVAA). The propeptide occupies 26–110 (DGPRIYRNEW…QQVVKRRVKR (85 aa)). Residues 111-488 (RVKRVYSMYP…GLMDAGKMVE (378 aa)) are catalytic. At 111–1618 (RVKRVYSMYP…ADSIPTNVAY (1508 aa)) the chain is on the extracellular side. The 321-residue stretch at 167–487 (QWSDMNVEAA…FGLMDAGKMV (321 aa)) folds into the Peptidase S8 domain. Active-site charge relay system residues include aspartate 192 and histidine 233. Asparagine 246 carries N-linked (GlcNAc...) asparagine glycosylation. Serine 407 (charge relay system) is an active-site residue. In terms of domain architecture, P/Homo B spans 495–638 (RVPEQHVCEE…KLILYGTAEH (144 aa)). A glycan (N-linked (GlcNAc...) asparagine) is linked at asparagine 529. Basic and acidic residues predominate over residues 643–657 (RDEESRPHTPQTREE). Residues 643–666 (RDEESRPHTPQTREEPTDEEECED) form a disordered region. Positions 664–1649 (CEDGDYYDRS…LQARSNGRLC (986 aa)) are CRM (Cys-rich motif). The N-linked (GlcNAc...) asparagine glycan is linked to asparagine 885. The helical transmembrane segment at 1619–1639 (IAVATFICVVIVVLFFVVFGM) threads the bilayer. At 1640–1696 (LQARSNGRLCWAHKYQQVPTTRYEKMNDHVNILSQEDFYNEDSLSEDEIHSIDSTRH) the chain is on the cytoplasmic side.

This sequence belongs to the peptidase S8 family.

It is found in the secreted. The protein localises to the cell membrane. In terms of biological role, serine endoprotease that processes various proproteins by cleavage at paired basic amino acids, recognizing the RXXX[KR]R consensus motif. Likely functions in the constitutive and regulated secretory pathways. In Branchiostoma californiense (California lancelet), this protein is Proprotein convertase subtilisin/kexin type 5 (PC6).